Reading from the N-terminus, the 373-residue chain is Cell surface Cu-only superoxide dismutase ARB_03674 (373 aa).

The signal sequence occupies residues 1 to 55; that stretch reads MIWKQPPRRMGEMGGSLSRRFGNAAASWAVWRVSRSCFSLLFFFYFFLFFSSSSL. 2 N-linked (GlcNAc...) asparagine glycosylation sites follow: Asn-75 and Asn-141. Residues His-194, His-196, and His-212 each coordinate Cu cation. Cysteines 206 and 289 form a disulfide. Asn-254 and Asn-274 each carry an N-linked (GlcNAc...) asparagine glycan. A Cu cation-binding site is contributed by His-280. N-linked (GlcNAc...) asparagine glycosylation is found at Asn-283 and Asn-291. Residues 329 to 348 form a disordered region; it reads GHAPTISATYTPTPTPSPPA. Positions 331–340 are enriched in low complexity; that stretch reads APTISATYTP. Gly-352 carries GPI-anchor amidated glycine lipidation. A propeptide spans 353-373 (removed in mature form); it reads AGRLVGFSLGAIMAALVPLAL.

This sequence belongs to the Cu-Zn superoxide dismutase family. As to quaternary structure, monomer. The cofactor is Cu cation. The GPI-anchor is attached to the protein in the endoplasmic reticulum and serves to target the protein to the cell surface. There, the glucosamine-inositol phospholipid moiety is cleaved off and the GPI-modified mannoprotein is covalently attached via its lipidless GPI glycan remnant to the 1,6-beta-glucan of the outer cell wall layer.

It is found in the secreted. The protein localises to the cell wall. Its subcellular location is the cell membrane. The enzyme catalyses 2 superoxide + 2 H(+) = H2O2 + O2. In terms of biological role, superoxide dismutases serve to convert damaging superoxide radicals, a key form of ROS, to less damaging hydrogen peroxide that can be converted into water by catalase action. Degrades host-derived reactive oxygen species to escape innate immune surveillance. Involved in the occurrence of miconazole-tolerant persisters in biofilms. Persisters are cells that survive high doses of an antimicrobial agent. The unusual attributes of SOD5-like fungal proteins, including the absence of zinc and an open active site that readily captures extracellular copper, make these SODs well suited to meet challenges in zinc and copper availability at the host-pathogen interface. The polypeptide is Cell surface Cu-only superoxide dismutase ARB_03674 (Arthroderma benhamiae (strain ATCC MYA-4681 / CBS 112371) (Trichophyton mentagrophytes)).